The chain runs to 424 residues: Enolase (424 aa).

Q162 provides a ligand contact to (2R)-2-phosphoglycerate. Residue E204 is the Proton donor of the active site. Residues D241, E284, and D311 each coordinate Mg(2+). (2R)-2-phosphoglycerate contacts are provided by K336, R365, S366, and K387. Catalysis depends on K336, which acts as the Proton acceptor.

This sequence belongs to the enolase family. It depends on Mg(2+) as a cofactor.

It is found in the cytoplasm. The protein resides in the secreted. Its subcellular location is the cell surface. The enzyme catalyses (2R)-2-phosphoglycerate = phosphoenolpyruvate + H2O. The protein operates within carbohydrate degradation; glycolysis; pyruvate from D-glyceraldehyde 3-phosphate: step 4/5. Functionally, catalyzes the reversible conversion of 2-phosphoglycerate (2-PG) into phosphoenolpyruvate (PEP). It is essential for the degradation of carbohydrates via glycolysis. The protein is Enolase of Parvibaculum lavamentivorans (strain DS-1 / DSM 13023 / NCIMB 13966).